A 602-amino-acid chain; its full sequence is Pyranose dehydrogenase 1 (602 aa).

The signal sequence occupies residues 1–25 (MLPRVTKLNSRLLSLALLGIQIARG). Asn100 carries N-linked (GlcNAc...) asparagine glycosylation. His128 is subject to Tele-8alpha-FAD histidine. Residues Asn200, Asn277, and Asn344 are each glycosylated (N-linked (GlcNAc...) asparagine). The active-site Proton acceptor is the His537. His581 is a catalytic residue.

This sequence belongs to the GMC oxidoreductase family. In terms of assembly, monomer. FAD is required as a cofactor. In terms of processing, N-glycosylated.

It localises to the secreted. It catalyses the reaction pyranose + acceptor = pyranos-2-ulose + reduced acceptor.. The catalysed reaction is pyranose + acceptor = pyranos-3-ulose + reduced acceptor.. The enzyme catalyses pyranose + acceptor = pyranos-2,3-diulose + reduced acceptor.. It carries out the reaction a pyranoside + acceptor = a pyranosid-3-ulose + reduced acceptor.. It catalyses the reaction a pyranoside + acceptor = a pyranosid-3,4-diulose + reduced acceptor.. In terms of biological role, catalyzes the single-oxidation or sequential double oxidation reaction of carbohydrates primarily at carbon-2 and/or carbon-3 with the concomitant reduction of the flavin. The enzyme exhibits a broad sugar substrate specificity, oxidizing different aldopyranoses to the corresponding C-1, C-2, C-3 or C-1,2, C-2,3 and C-3,4 (di)dehydro sugars with substrate-specific regioselectivity. Accepts only a narrow range of electron acceptors such as substituted benzoquinones and complexed metal ions and reacts extremely slowly with O(2) as acceptor. May play a role in the natural recycling of plant matter by oxidizing all major monosaccharides in lignocellulose and by reducing quinone compounds or reactive radical species generated during lignin depolymerization. The polypeptide is Pyranose dehydrogenase 1 (Leucoagaricus meleagris (Western flat-topped agaric)).